We begin with the raw amino-acid sequence, 265 residues long: tRNA (guanine-N(1)-)-methyltransferase (265 aa).

S-adenosyl-L-methionine is bound by residues Gly110 and 129–134 (LGDFVM). The segment at 243 to 265 (LAAWGAPPPPLPKRRRGAKPNPN) is disordered. The segment covering 254-265 (PKRRRGAKPNPN) has biased composition (basic residues).

This sequence belongs to the RNA methyltransferase TrmD family. As to quaternary structure, homodimer.

It localises to the cytoplasm. The catalysed reaction is guanosine(37) in tRNA + S-adenosyl-L-methionine = N(1)-methylguanosine(37) in tRNA + S-adenosyl-L-homocysteine + H(+). In terms of biological role, specifically methylates guanosine-37 in various tRNAs. This Deinococcus geothermalis (strain DSM 11300 / CIP 105573 / AG-3a) protein is tRNA (guanine-N(1)-)-methyltransferase.